The chain runs to 620 residues: Arginine--tRNA ligase (620 aa).

The 'HIGH' region motif lies at A147–G157.

This sequence belongs to the class-I aminoacyl-tRNA synthetase family. In terms of assembly, monomer.

The protein resides in the cytoplasm. The catalysed reaction is tRNA(Arg) + L-arginine + ATP = L-arginyl-tRNA(Arg) + AMP + diphosphate. This is Arginine--tRNA ligase from Bifidobacterium longum (strain DJO10A).